The primary structure comprises 318 residues: S-adenosylmethionine/S-adenosylhomocysteine transporter (318 aa).

10 helical membrane-spanning segments follow: residues 7–27, 44–64, 76–96, 105–125, 134–154, 163–183, 193–213, 231–251, 262–282, and 285–305; these read FANL…AFIW, LFVT…LLLF, VMPI…LEFI, KACF…YVQL, LGGL…GGGE, LGMP…GWTL, SLSI…LSLA, LFLQ…YNLF, FLSF…WLLL, and SFPP…RLIY. Residues 25–148 enclose the EamA 1 domain; the sequence is FIWSSSFALS…LGLVSYLVYL (124 aa). The 114-residue stretch at 191–304 folds into the EamA 2 domain; sequence CESLSITAIN…GFMVLGCRLI (114 aa).

Belongs to the drug/metabolite transporter (DMT) superfamily. 10 TMS drug/metabolite exporter (DME) (TC 2.A.7.3) family.

The protein localises to the cell membrane. Transports S-adenosylmethionine (SAM) and S-adenosylhomocysteine (SAH). Allows bacteria to acquire SAM from the eukaryotic host cell and to likely remove the toxic by-product SAH. The protein is S-adenosylmethionine/S-adenosylhomocysteine transporter of Chlamydia muridarum (strain MoPn / Nigg).